The primary structure comprises 244 residues: UPF0246 protein SGO_1307 (244 aa).

Belongs to the UPF0246 family.

This Streptococcus gordonii (strain Challis / ATCC 35105 / BCRC 15272 / CH1 / DL1 / V288) protein is UPF0246 protein SGO_1307.